We begin with the raw amino-acid sequence, 278 residues long: Elongation factor Ts (278 aa).

Positions 80-83 (TDFV) are involved in Mg(2+) ion dislocation from EF-Tu.

It belongs to the EF-Ts family.

The protein resides in the cytoplasm. In terms of biological role, associates with the EF-Tu.GDP complex and induces the exchange of GDP to GTP. It remains bound to the aminoacyl-tRNA.EF-Tu.GTP complex up to the GTP hydrolysis stage on the ribosome. This chain is Elongation factor Ts, found in Micrococcus luteus (strain ATCC 4698 / DSM 20030 / JCM 1464 / CCM 169 / CCUG 5858 / IAM 1056 / NBRC 3333 / NCIMB 9278 / NCTC 2665 / VKM Ac-2230) (Micrococcus lysodeikticus).